Here is a 356-residue protein sequence, read N- to C-terminus: Putative transposase y4zB (356 aa).

Positions M1–A19 are enriched in low complexity. 2 disordered regions span residues M1 to D54 and P334 to V356.

This sequence belongs to the transposase 11 family.

This is Putative transposase y4zB from Sinorhizobium fredii (strain NBRC 101917 / NGR234).